A 387-amino-acid polypeptide reads, in one-letter code: 3-ketoacyl-CoA thiolase (387 aa).

The active-site Acyl-thioester intermediate is C91. Catalysis depends on proton acceptor residues H343 and C373.

It belongs to the thiolase-like superfamily. Thiolase family. In terms of assembly, heterotetramer of two alpha chains (FadB) and two beta chains (FadA).

It is found in the cytoplasm. The catalysed reaction is an acyl-CoA + acetyl-CoA = a 3-oxoacyl-CoA + CoA. It participates in lipid metabolism; fatty acid beta-oxidation. Its function is as follows. Catalyzes the final step of fatty acid oxidation in which acetyl-CoA is released and the CoA ester of a fatty acid two carbons shorter is formed. The sequence is that of 3-ketoacyl-CoA thiolase from Salmonella choleraesuis (strain SC-B67).